A 406-amino-acid chain; its full sequence is MKKVHERFLEYVKVDTKSDETTRVTPSTKGQLELGKILAEELKEIGVDEVRISDKGYVYACLKSNCDKDIPKIGFISHMDTAPDMSGKNVNPKIVENYDGKDIELGNGYTLSPSFSPELPMYKGQTLITTDGTTLLGADDKAGVAEIVTAIEYLINNPEIKHGDIKIGFTPDEEIGEGADHFDVEGFGADFAYTLDGGRIGELEYENFNAASAKVEIIGKNVHPGSAKGKMINSILVAHEFVSMLPLDEVPEKTEGYEGFSFLLDIQGEVEKTSLSFIIRDFDKEGFKNRKERFNEIAKELNKKYGEGTVTVTLKDQYMNMKEMIEPRMHIVETAEKAMKQCGIEPIKNPIRGGTDGARLSFMGLPTPNLFTGGENFHGRYEYISINSMEKAVEVILNIIKIYAEK.

Zn(2+) is bound at residue histidine 78. Residue aspartate 80 is part of the active site. A Zn(2+)-binding site is contributed by aspartate 139. Glutamate 173 serves as the catalytic Proton acceptor. Zn(2+) is bound by residues glutamate 174, aspartate 196, and histidine 378.

The protein belongs to the peptidase M20B family. Zn(2+) serves as cofactor.

Its subcellular location is the cytoplasm. The catalysed reaction is Release of the N-terminal residue from a tripeptide.. In terms of biological role, cleaves the N-terminal amino acid of tripeptides. The chain is Peptidase T from Clostridium perfringens (strain ATCC 13124 / DSM 756 / JCM 1290 / NCIMB 6125 / NCTC 8237 / Type A).